Reading from the N-terminus, the 274-residue chain is Large ribosomal subunit protein uL2 (274 aa).

Disordered stretches follow at residues 28 to 54 (APYAPLLEKNSKSGGRNNNGRITTRHI) and 223 to 265 (VAMN…KRTD). Low complexity predominate over residues 39 to 48 (KSGGRNNNGR).

It belongs to the universal ribosomal protein uL2 family. Part of the 50S ribosomal subunit. Forms a bridge to the 30S subunit in the 70S ribosome.

One of the primary rRNA binding proteins. Required for association of the 30S and 50S subunits to form the 70S ribosome, for tRNA binding and peptide bond formation. It has been suggested to have peptidyltransferase activity; this is somewhat controversial. Makes several contacts with the 16S rRNA in the 70S ribosome. The polypeptide is Large ribosomal subunit protein uL2 (Alteromonas mediterranea (strain DSM 17117 / CIP 110805 / LMG 28347 / Deep ecotype)).